Consider the following 125-residue polypeptide: Phosphoribosyl-AMP cyclohydrolase (125 aa).

Asp80 provides a ligand contact to Mg(2+). Cys81 lines the Zn(2+) pocket. 2 residues coordinate Mg(2+): Asp82 and Asp84. Cys97 and Cys104 together coordinate Zn(2+).

It belongs to the PRA-CH family. Homodimer. The cofactor is Mg(2+). Zn(2+) is required as a cofactor.

Its subcellular location is the cytoplasm. It catalyses the reaction 1-(5-phospho-beta-D-ribosyl)-5'-AMP + H2O = 1-(5-phospho-beta-D-ribosyl)-5-[(5-phospho-beta-D-ribosylamino)methylideneamino]imidazole-4-carboxamide. It participates in amino-acid biosynthesis; L-histidine biosynthesis; L-histidine from 5-phospho-alpha-D-ribose 1-diphosphate: step 3/9. Functionally, catalyzes the hydrolysis of the adenine ring of phosphoribosyl-AMP. The protein is Phosphoribosyl-AMP cyclohydrolase of Leifsonia xyli subsp. xyli (strain CTCB07).